The chain runs to 120 residues: MATSMKLACVALVMCMVVIAPMAEAALSCGTVSGDLAPCLTYLQAPNNASPPPPCCAGVKKLLGAATTTPDRQAACNCLKSAAGSISRLNTNNAAALPGKCGVSIPYKISTSTNCNTIKF.

The signal sequence occupies residues Met1–Ala25. 4 disulfide bridges follow: Cys29-Cys78, Cys39-Cys55, Cys56-Cys101, and Cys76-Cys115.

Belongs to the plant LTP family. In terms of tissue distribution, expressed in roots, stem, leaves and tendrils of the mature plant.

Plant non-specific lipid-transfer proteins transfer phospholipids as well as galactolipids across membranes. May play a role in wax or cutin deposition in the cell walls of expanding epidermal cells and certain secretory tissues. This chain is Non-specific lipid-transfer protein 2, found in Pisum sativum (Garden pea).